The sequence spans 239 residues: Ribonuclease 3 (239 aa).

Residues 11 to 133 (HAAIQKKLGY…MFAAVSFDAD (123 aa)) form the RNase III domain. Glu-46 is a Mg(2+) binding site. The active site involves Asp-50. Mg(2+) is bound by residues Asp-119 and Glu-122. Residue Glu-122 is part of the active site. One can recognise a DRBM domain in the interval 160-230 (DGKTALQEAL…AKEALKWLEE (71 aa)).

Belongs to the ribonuclease III family. Homodimer. It depends on Mg(2+) as a cofactor.

The protein resides in the cytoplasm. The catalysed reaction is Endonucleolytic cleavage to 5'-phosphomonoester.. Digests double-stranded RNA. Involved in the processing of primary rRNA transcript to yield the immediate precursors to the large and small rRNAs (23S and 16S). Also processes some mRNAs, and tRNAs when they are encoded in the rRNA operon. In terms of biological role, CRISPR (clustered regularly interspaced short palindromic repeat) is an adaptive immune system that provides protection against mobile genetic elements (viruses, transposable elements and conjugative plasmids). CRISPR clusters contain spacers, sequences complementary to antecedent mobile elements, and target invading nucleic acids. CRISPR clusters are transcribed and processed into CRISPR RNA (crRNA). In this organism endogenous ribonuclease 3 and Cas9 are required for correct coprocessing of pre-crRNA and the trans-encoded small RNA (tracrRNA). Cas9, crRNA and tracrRNA are required for cleavage of invading DNA. Complements pre-crRNA and tracrRNA coprocessing defects in an rnc deletion in S.pyogenes strain 370. The polypeptide is Ribonuclease 3 (Neisseria meningitidis serogroup A / serotype 4A (strain DSM 15465 / Z2491)).